We begin with the raw amino-acid sequence, 235 residues long: Ion-translocating oxidoreductase complex subunit E (235 aa).

5 helical membrane-spanning segments follow: residues 63-83, 93-113, 117-137, 152-172, and 206-226; these read LGLG…ISLF, IPIY…LMNA, TLYQ…IIIG, IWDG…LGAL, and SFLL…LLAI.

Belongs to the NqrDE/RnfAE family. The complex is composed of six subunits: RnfA, RnfB, RnfC, RnfD, RnfE and RnfG.

It is found in the cell inner membrane. In terms of biological role, part of a membrane-bound complex that couples electron transfer with translocation of ions across the membrane. This Haemophilus influenzae (strain ATCC 51907 / DSM 11121 / KW20 / Rd) protein is Ion-translocating oxidoreductase complex subunit E.